Reading from the N-terminus, the 602-residue chain is Elongation factor 4 (602 aa).

One can recognise a tr-type G domain in the interval 7–189 (RNIRNFSIIA…AIVQRIPAPQ (183 aa)). GTP is bound by residues 19 to 24 (DHGKST) and 136 to 139 (NKID).

Belongs to the TRAFAC class translation factor GTPase superfamily. Classic translation factor GTPase family. LepA subfamily.

The protein localises to the cell inner membrane. The enzyme catalyses GTP + H2O = GDP + phosphate + H(+). Its function is as follows. Required for accurate and efficient protein synthesis under certain stress conditions. May act as a fidelity factor of the translation reaction, by catalyzing a one-codon backward translocation of tRNAs on improperly translocated ribosomes. Back-translocation proceeds from a post-translocation (POST) complex to a pre-translocation (PRE) complex, thus giving elongation factor G a second chance to translocate the tRNAs correctly. Binds to ribosomes in a GTP-dependent manner. This Xylella fastidiosa (strain 9a5c) protein is Elongation factor 4.